The sequence spans 591 residues: MAARHHTLSWSIASLHGDEQAVGAPLTTTELTALARTRLFGATGTVLMAIGALGAGARPVVQDPTFGVRLLNLPSRIQTVSLTMTTTGAVMMALAWLMLGRFTLGRRRMSRGKLDRTLLLWMLPLLIAPPMYSKDVYSYLAQSEIGRDGLDPYRVGPASGLGLGHVFTLSVPSLWRETPAPYGPLFLWIGRGISSLTGENIVAAVLCHRLVVLIGVTLIVWATPRLAQRCGVAEVSALWLGAANPLLIMHLVAGIHNEALMLGLMLTGVEFALRGLDMANTPRPSPETWRLGPATIRASRRPELGASPRAGASRAVKPRPEWGPLAMLLAGSILITLSSQVKLPSLLAMGFVTTVLAYRWGGNLRALLLAAAVMASLTLAIMAILGWASGLGFGWINTLGTANVVRSWMSPPTLLALGTGHVGILLGLGDHTTAVLSLTRAIGVLIITVMVCWLLLAVLRGRLHPIGGLGVALAVTVLLFPVVQPWYLLWAIIPLAAWATRPGFRVAAILATLIVGIFGPTANGDRFALFQIVDATAASAIIVILLIALTYTRLPWRPLAAEQVVTAAESASKTPATRRPTAAPDAYADST.

Transmembrane regions (helical) follow at residues 40–60, 80–100, 117–137, 201–221, 235–255, 259–279, 321–341, 367–387, 408–428, 441–461, 473–493, 502–522, and 527–547; these read FGAT…ARPV, VSLT…LMLG, TLLL…KDVY, IVAA…LIVW, VSAL…VAGI, ALML…LDMA, EWGP…SSQV, LLLA…ILGW, WMSP…LLGL, AIGV…VLRG, LAVT…WAII, PGFR…GPTA, and FALF…ILLI. Positions 569 to 591 are disordered; that stretch reads ESASKTPATRRPTAAPDAYADST. Low complexity predominate over residues 574-584; that stretch reads TPATRRPTAAP.

The protein belongs to the MptA/B family.

It localises to the membrane. Functionally, catalyzes the addition of alpha-(1-&gt;6)-mannose residue. The polypeptide is Alpha-(1-&gt;6)-mannopyranosyltransferase Rv1459c (Mycobacterium tuberculosis (strain ATCC 25618 / H37Rv)).